A 300-amino-acid polypeptide reads, in one-letter code: Small ribosomal subunit biogenesis GTPase RsgA (300 aa).

Positions arginine 69–phenylalanine 231 constitute a CP-type G domain. Residues asparagine 119–aspartate 122 and glycine 172–threonine 180 contribute to the GTP site. Residues cysteine 255, cysteine 260, histidine 262, and cysteine 268 each contribute to the Zn(2+) site.

Belongs to the TRAFAC class YlqF/YawG GTPase family. RsgA subfamily. As to quaternary structure, monomer. Associates with 30S ribosomal subunit, binds 16S rRNA. Requires Zn(2+) as cofactor.

Its subcellular location is the cytoplasm. In terms of biological role, one of several proteins that assist in the late maturation steps of the functional core of the 30S ribosomal subunit. Helps release RbfA from mature subunits. May play a role in the assembly of ribosomal proteins into the subunit. Circularly permuted GTPase that catalyzes slow GTP hydrolysis, GTPase activity is stimulated by the 30S ribosomal subunit. The polypeptide is Small ribosomal subunit biogenesis GTPase RsgA (Bordetella bronchiseptica (strain ATCC BAA-588 / NCTC 13252 / RB50) (Alcaligenes bronchisepticus)).